A 177-amino-acid chain; its full sequence is N5-carboxyaminoimidazole ribonucleotide mutase (177 aa).

3 residues coordinate substrate: Ser-18, Asp-21, and Arg-48.

It belongs to the AIR carboxylase family. Class I subfamily.

The catalysed reaction is 5-carboxyamino-1-(5-phospho-D-ribosyl)imidazole + H(+) = 5-amino-1-(5-phospho-D-ribosyl)imidazole-4-carboxylate. It functions in the pathway purine metabolism; IMP biosynthesis via de novo pathway; 5-amino-1-(5-phospho-D-ribosyl)imidazole-4-carboxylate from 5-amino-1-(5-phospho-D-ribosyl)imidazole (N5-CAIR route): step 2/2. Its function is as follows. Catalyzes the conversion of N5-carboxyaminoimidazole ribonucleotide (N5-CAIR) to 4-carboxy-5-aminoimidazole ribonucleotide (CAIR). This Pyrococcus horikoshii (strain ATCC 700860 / DSM 12428 / JCM 9974 / NBRC 100139 / OT-3) protein is N5-carboxyaminoimidazole ribonucleotide mutase.